A 193-amino-acid polypeptide reads, in one-letter code: Oocyte-secreted protein 3 (193 aa).

The first 22 residues, 1 to 22 (MKDFVRLQSSFLLCTILTLSEQ), serve as a signal peptide directing secretion. N-linked (GlcNAc...) asparagine glycosylation is found at Asn64, Asn130, Asn148, Asn151, Asn165, and Asn178.

It belongs to the PLAC1 family.

It localises to the secreted. The chain is Oocyte-secreted protein 3 from Homo sapiens (Human).